A 173-amino-acid chain; its full sequence is MSHQKESKRDNQHTDKEYVEKLVKLNRTAKVVKGGRRFSFSALTVVGDQKGRVGYGFGKANDVSDAIRKSIEKAKANMVTFPLKNGTIPHEVQGKFKGSSVLLRPACSGTGIIAGGTIRAIMEAAGATDLLSKSLGSSSAVNVVKATFDAASLLMDGKKIAKSRGKTLLDVWG.

The 64-residue stretch at 18–81 folds into the S5 DRBM domain; sequence YVEKLVKLNR…EKAKANMVTF (64 aa).

It belongs to the universal ribosomal protein uS5 family. In terms of assembly, part of the 30S ribosomal subunit. Contacts proteins S4 and S8.

Functionally, with S4 and S12 plays an important role in translational accuracy. In terms of biological role, located at the back of the 30S subunit body where it stabilizes the conformation of the head with respect to the body. This chain is Small ribosomal subunit protein uS5, found in Treponema denticola (strain ATCC 35405 / DSM 14222 / CIP 103919 / JCM 8153 / KCTC 15104).